A 68-amino-acid chain; its full sequence is MPKLKTKSAAKKRFKLTASGNVIASQAGKKHFMRRRTKAQIRNLRGTTILCNQEGYNIKKYFLPYGTN.

Belongs to the bacterial ribosomal protein bL35 family.

The sequence is that of Large ribosomal subunit protein bL35 from Rickettsia canadensis (strain McKiel).